A 396-amino-acid polypeptide reads, in one-letter code: 1-deoxy-D-xylulose 5-phosphate reductoisomerase (396 aa).

NADPH is bound by residues T13, G14, S15, I16, and N127. K128 is a 1-deoxy-D-xylulose 5-phosphate binding site. E129 serves as a coordination point for NADPH. Residue D153 participates in Mn(2+) binding. The 1-deoxy-D-xylulose 5-phosphate site is built by S154, E155, S184, and H207. Position 155 (E155) interacts with Mn(2+). G213 contributes to the NADPH binding site. 4 residues coordinate 1-deoxy-D-xylulose 5-phosphate: S220, N225, K226, and E229. E229 provides a ligand contact to Mn(2+).

This sequence belongs to the DXR family. The cofactor is Mg(2+). Mn(2+) serves as cofactor.

It carries out the reaction 2-C-methyl-D-erythritol 4-phosphate + NADP(+) = 1-deoxy-D-xylulose 5-phosphate + NADPH + H(+). It functions in the pathway isoprenoid biosynthesis; isopentenyl diphosphate biosynthesis via DXP pathway; isopentenyl diphosphate from 1-deoxy-D-xylulose 5-phosphate: step 1/6. Inhibited by fosmidomycin and 3-(N-acetyl-N-hydroxyamino)-propylphosphonic acid (FR-900098). Catalyzes the NADPH-dependent rearrangement and reduction of 1-deoxy-D-xylulose-5-phosphate (DXP) to 2-C-methyl-D-erythritol 4-phosphate (MEP). This chain is 1-deoxy-D-xylulose 5-phosphate reductoisomerase, found in Pseudomonas aeruginosa (strain ATCC 15692 / DSM 22644 / CIP 104116 / JCM 14847 / LMG 12228 / 1C / PRS 101 / PAO1).